The sequence spans 180 residues: Oligoribonuclease (180 aa).

The Exonuclease domain occupies 7–170 (LIWIDLEMTG…DDIRESIAEL (164 aa)). Residue Y128 is part of the active site.

This sequence belongs to the oligoribonuclease family.

Its subcellular location is the cytoplasm. Functionally, 3'-to-5' exoribonuclease specific for small oligoribonucleotides. The chain is Oligoribonuclease from Ectopseudomonas mendocina (strain ymp) (Pseudomonas mendocina).